The sequence spans 259 residues: Hemin import ATP-binding protein HmuV (259 aa).

An ABC transporter domain is found at 8–242 (ISANNISYRI…KMIENVYGHK (235 aa)). Position 40 to 47 (40 to 47 (GPNGAGKS)) interacts with ATP.

It belongs to the ABC transporter superfamily. Heme (hemin) importer (TC 3.A.1.14.5) family. The complex is composed of two ATP-binding proteins (HmuV), two transmembrane proteins (HmuU) and a solute-binding protein (HmuT).

The protein resides in the cell inner membrane. Part of the ABC transporter complex HmuTUV involved in hemin import. Responsible for energy coupling to the transport system. This is Hemin import ATP-binding protein HmuV from Aliivibrio fischeri (strain ATCC 700601 / ES114) (Vibrio fischeri).